We begin with the raw amino-acid sequence, 581 residues long: Arginine--tRNA ligase (581 aa).

The 'HIGH' region signature appears at 126-136 (PNLAKEMHVGH).

Belongs to the class-I aminoacyl-tRNA synthetase family. As to quaternary structure, monomer.

Its subcellular location is the cytoplasm. The catalysed reaction is tRNA(Arg) + L-arginine + ATP = L-arginyl-tRNA(Arg) + AMP + diphosphate. This Shewanella sp. (strain MR-7) protein is Arginine--tRNA ligase.